A 166-amino-acid chain; its full sequence is uncharacterized protein (166 aa).

The protein to C.perfringens pCP13 PCP12.

This is an uncharacterized protein from Clostridium perfringens.